The chain runs to 104 residues: Iron-sulfur cluster assembly protein CyaY (104 aa).

The protein belongs to the frataxin family.

Its function is as follows. Involved in iron-sulfur (Fe-S) cluster assembly. May act as a regulator of Fe-S biogenesis. This chain is Iron-sulfur cluster assembly protein CyaY, found in Vibrio vulnificus (strain CMCP6).